Reading from the N-terminus, the 815-residue chain is Sodium/hydrogen exchanger 1 (815 aa).

Residues 1 to 98 (MVLRSGICGL…FPVLGIDYTH (98 aa)) are Extracellular-facing. Residue threonine 42 is glycosylated (O-linked (GalNAc...) threonine). Residues 42 to 79 (TASTIRSSEPPRERSIGDVTTAPPEVTPESRPVNHSVT) form a disordered region. Serine 56 is a glycosylation site (O-linked (GalNAc...) serine). Threonine 61, threonine 62, and threonine 68 each carry an O-linked (GalNAc...) threonine glycan. N-linked (GlcNAc...) asparagine glycosylation is present at asparagine 75. The chain crosses the membrane as a helical span at residues 99–121 (VRTPFEISLWILLACLMKIGFHV). At 122–130 (IPTISSIVP) the chain is on the cytoplasmic side. The chain crosses the membrane as a helical span at residues 131 to 148 (ESCLLIVVGLLVGGLIKG). The Extracellular segment spans residues 149–158 (VGETPPFLQS). Residues 159 to 176 (DVFFLFLLPPIILDAGYF) traverse the membrane as a helical segment. At 177–186 (LPLRQFTENL) the chain is on the cytoplasmic side. The helical transmembrane segment at 187-215 (GTILIFAVVGTLWNAFFLGGLMYAVCLVG) threads the bilayer. At 216–222 (GEQINNI) the chain is on the extracellular side. A helical membrane pass occupies residues 223–249 (GLLDNLLFGSIISAVDPVAVLAVFEEI). Residues 250–252 (HIN) lie on the Cytoplasmic side of the membrane. Residues 253-283 (ELLHILVFGESLLNDAVTVVLYHLFEEFANY) traverse the membrane as a helical segment. The Extracellular segment spans residues 284-287 (EHVG). The helical transmembrane segment at 288-322 (IVDIFLGFLSFFVVALGGVLVGVVYGVIAAFTSRF) threads the bilayer. Over 323–328 (TSHIRV) the chain is Cytoplasmic. The helical transmembrane segment at 329–341 (IEPLFVFLYSYMA) threads the bilayer. The Extracellular segment spans residues 342 to 350 (YLSAELFHL). The chain crosses the membrane as a helical span at residues 351 to 371 (SGIMALIASGVVMRPYVEANI). Residues 372–373 (SH) lie on the Cytoplasmic side of the membrane. A helical membrane pass occupies residues 374 to 404 (KSHTTIKYFLKMWSSVSETLIFIFLGVSTVA). Over 405-410 (GSHHWN) the chain is Extracellular. The chain crosses the membrane as a helical span at residues 411 to 438 (WTFVISTLLFCLIARVLGVLGLTWFINK). Topologically, residues 439-444 (FRIVKL) are cytoplasmic. Residues 445–469 (TPKDQFIIAYGGLRGAIAFSLGYLL) form a helical membrane-spanning segment. Over 470–475 (DKKHFP) the chain is Extracellular. Residues 476-505 (MCDLFLTAIITVIFFTVFVQGMTIRPLVDL) form a helical membrane-spanning segment. The segment at 503-545 (VDLLAVKKKQETKRSINEEIHTQFLDHLLTGIEDICGHYGHHH) is interaction with TESC. Over 506 to 815 (LAVKKKQETK…EGEPFFPKGQ (310 aa)) the chain is Cytoplasmic. The PI(4,5)P2-binding region stretch occupies residues 509–516 (KKKQETKR). The interval 515–545 (KRSINEEIHTQFLDHLLTGIEDICGHYGHHH) is interaction with CHP2. The segment at 540–545 (HYGHHH) is confers pH-dependent PI(4,5)P2 binding. A PI(4,5)P2-binding region region spans residues 552-560 (RFNKKYVKK). Phosphoserine occurs at positions 599 and 602. Threonine 603 is subject to Phosphothreonine. Phosphoserine is present on residues serine 605 and serine 648. The interval 633-815 (KILRNNLQKT…EGEPFFPKGQ (183 aa)) is interaction with TESC. The interaction with CALM1 stretch occupies residues 633 to 815 (KILRNNLQKT…EGEPFFPKGQ (183 aa)). Residues 684–687 (LTVP) form an interaction with PPP3CA region. 3 positions are modified to phosphoserine: serine 693, serine 697, and serine 703. The interaction with PPP3CA stretch occupies residues 715 to 720 (PVITID). Residues serine 723, serine 726, and serine 729 each carry the phosphoserine modification. The disordered stretch occupies residues 744 to 815 (LSRDPAKVAE…EGEPFFPKGQ (72 aa)). Threonine 779 carries the phosphothreonine modification. The segment covering 782-791 (PSDSPSSQRI) has biased composition (polar residues). Residues serine 785, serine 787, and serine 796 each carry the phosphoserine modification.

This sequence belongs to the monovalent cation:proton antiporter 1 (CPA1) transporter (TC 2.A.36) family. In terms of assembly, homodimer; dimerization is crucial for its function. Oligomer. Interacts with CALM1 in a calcium-dependent manner. Interacts with TESC. Interacts (via the C-terminal domain) with CHP1; the interaction occurs at the plasma membrane in a calcium-dependent manner and facilitates the maturation, cell surface expression, and function of SLC9A3. Interacts with CHP2; the interaction occurs in a calcium-dependent manner. Interacts with EZR; regulates the cytoskeletal interactions of SLC9A1 and promotes stress fiber formation. O-glycosylated. In terms of processing, ubiquitinated, leading to its degradation by the proteasome. Ubiquitination is reduced by CHP1. Post-translationally, phosphorylation at Thr-779 increases SLC9A1 activity. Specifically dephosphorylated at Thr-779 by PPP3CA that negatively regulates SLC9A1 activity. Phosphorylation at Ser-648 by AKT1 reduces SLC9A1 binding to CALM1. Palmitoylated; may play a major role in SLC9A1 regulation. Kidney and intestine.

The protein resides in the cell membrane. It localises to the basolateral cell membrane. It carries out the reaction Na(+)(in) + H(+)(out) = Na(+)(out) + H(+)(in). It catalyses the reaction Li(+)(out) + H(+)(in) = Li(+)(in) + H(+)(out). The catalysed reaction is Li(+)(in) + Na(+)(out) = Li(+)(out) + Na(+)(in). Activated at acidic pHs. Inhibited by amiloride and 5-amino-substituted derivatives. Inhibited by cariporide and eniporide. Phosphatidylinositol 4,5-bisphosphate (PI(4,5)P2) and phosphatidylinositol 3,4,5-trisphosphate (PI(3,4,5)P3) bind and differentially regulate SLC9A1 activity. Its function is as follows. Electroneutral Na(+) /H(+) antiporter that extrudes Na(+) in exchange for external protons driven by the inward sodium ion chemical gradient, protecting cells from acidification that occurs from metabolism. Exchanges intracellular H(+) ions for extracellular Na(+) in 1:1 stoichiometry. Plays a key role in maintening intracellular pH neutral and cell volume, and thus is important for cell growth, proliferation, migration and survival. In addition, can transport lithium Li(+) and also functions as a Na(+)/Li(+) antiporter. SLC9A1 also functions in membrane anchoring and organization of scaffolding complexes that coordinate signaling inputs. The chain is Sodium/hydrogen exchanger 1 from Homo sapiens (Human).